Consider the following 186-residue polypeptide: Threonylcarbamoyl-AMP synthase (186 aa).

Positions 5 to 186 constitute a YrdC-like domain; sequence TQSINDAVKC…DAITGEILRL (182 aa).

This sequence belongs to the SUA5 family. TsaC subfamily.

Its subcellular location is the cytoplasm. It carries out the reaction L-threonine + hydrogencarbonate + ATP = L-threonylcarbamoyladenylate + diphosphate + H2O. In terms of biological role, required for the formation of a threonylcarbamoyl group on adenosine at position 37 (t(6)A37) in tRNAs that read codons beginning with adenine. Catalyzes the conversion of L-threonine, HCO(3)(-)/CO(2) and ATP to give threonylcarbamoyl-AMP (TC-AMP) as the acyladenylate intermediate, with the release of diphosphate. In Coxiella burnetii (strain RSA 331 / Henzerling II), this protein is Threonylcarbamoyl-AMP synthase.